The chain runs to 419 residues: 3-oxo-isoapionate-4-phosphate decarboxylase (419 aa).

Mg(2+) is bound by residues lysine 179, aspartate 181, and glutamate 182. N6-carboxylysine is present on lysine 179.

The protein belongs to the RuBisCO large chain family. Mg(2+) is required as a cofactor.

It carries out the reaction 3-oxoisoapionate 4-phosphate + H(+) = L-erythrulose 1-phosphate + CO2. The protein operates within carbohydrate metabolism. In terms of biological role, involved in catabolism of D-apiose. Catalyzes the decarboxylation of 3-oxo-isoapionate 4-phosphate to L-erythrulose 1-phosphate. The sequence is that of 3-oxo-isoapionate-4-phosphate decarboxylase from Rhizobium rhizogenes (strain K84 / ATCC BAA-868) (Agrobacterium radiobacter).